We begin with the raw amino-acid sequence, 100 residues long: Large ribosomal subunit protein uL23 (100 aa).

The protein belongs to the universal ribosomal protein uL23 family. As to quaternary structure, part of the 50S ribosomal subunit. Contacts protein L29, and trigger factor when it is bound to the ribosome.

Functionally, one of the early assembly proteins it binds 23S rRNA. One of the proteins that surrounds the polypeptide exit tunnel on the outside of the ribosome. Forms the main docking site for trigger factor binding to the ribosome. This chain is Large ribosomal subunit protein uL23, found in Corynebacterium aurimucosum (strain ATCC 700975 / DSM 44827 / CIP 107346 / CN-1) (Corynebacterium nigricans).